A 442-amino-acid chain; its full sequence is Enolase 1 (442 aa).

A binds human collagen region spans residues 73–140 (KLIAKEIVGY…YNYLGGFNAH (68 aa)). Position 163 (Gln163) interacts with (2R)-2-phosphoglycerate. The Proton donor role is filled by Glu205. The Mg(2+) site is built by Asp242, Glu290, and Asp317. (2R)-2-phosphoglycerate is bound by residues Lys342, Arg371, Ser372, and Lys393. Catalysis depends on Lys342, which acts as the Proton acceptor.

Belongs to the enolase family. It depends on Mg(2+) as a cofactor.

The protein localises to the cytoplasm. It is found in the secreted. Its subcellular location is the cell surface. The catalysed reaction is (2R)-2-phosphoglycerate = phosphoenolpyruvate + H2O. Its pathway is carbohydrate degradation; glycolysis; pyruvate from D-glyceraldehyde 3-phosphate: step 4/5. In terms of biological role, catalyzes the reversible conversion of 2-phosphoglycerate (2-PG) into phosphoenolpyruvate (PEP). It is essential for the degradation of carbohydrates via glycolysis. 'Moonlights' as a collagen receptor. Binds host (human) collagen, which may contribute to pathogenicity. This Lactiplantibacillus plantarum (strain ATCC BAA-793 / NCIMB 8826 / WCFS1) (Lactobacillus plantarum) protein is Enolase 1.